The following is a 436-amino-acid chain: Mannan endo-1,4-beta-mannosidase F (436 aa).

An N-terminal signal peptide occupies residues 1 to 18 (MRSLSSVALLSAIGAASA). The region spanning 19 to 54 (QAGPWGQCAGISHTGPTTCESGWSCVYLNDWYSQCQ) is the CBM1 domain. The tract at residues 60-88 (SSSTTVSSTKQPSSTVAAPSSTTSAHTLP) is disordered. The segment at 79-113 (SSTTSAHTLPTGSGSFAKTDGLKFNIDGKTKYFAG) is ser-rich linker. Residues 114–436 (TNAYWLPFLT…CAVIDHISQI (323 aa)) are catalytic. Trp-146 and Asn-260 together coordinate substrate. Glu-261 serves as the catalytic Proton donor. Tyr-336 contributes to the substrate binding site. The Nucleophile role is filled by Glu-370. A substrate-binding site is contributed by Trp-400.

Belongs to the glycosyl hydrolase 5 (cellulase A) family.

It localises to the secreted. The enzyme catalyses Random hydrolysis of (1-&gt;4)-beta-D-mannosidic linkages in mannans, galactomannans and glucomannans.. Its function is as follows. Endo-1,4-mannanase, a crucial enzyme for depolymerization of seed galactomannans and wood galactoglucomannans. The polypeptide is Mannan endo-1,4-beta-mannosidase F (manF) (Aspergillus clavatus (strain ATCC 1007 / CBS 513.65 / DSM 816 / NCTC 3887 / NRRL 1 / QM 1276 / 107)).